Reading from the N-terminus, the 617-residue chain is Dihydroxy-acid dehydratase (617 aa).

D81 is a binding site for Mg(2+). Position 122 (C122) interacts with [2Fe-2S] cluster. Mg(2+) contacts are provided by D123 and K124. The residue at position 124 (K124) is an N6-carboxylysine. C197 contributes to the [2Fe-2S] cluster binding site. Mg(2+) is bound at residue E493. Residue S519 is the Proton acceptor of the active site.

This sequence belongs to the IlvD/Edd family. Homodimer. It depends on [2Fe-2S] cluster as a cofactor. Mg(2+) is required as a cofactor.

The enzyme catalyses (2R)-2,3-dihydroxy-3-methylbutanoate = 3-methyl-2-oxobutanoate + H2O. It catalyses the reaction (2R,3R)-2,3-dihydroxy-3-methylpentanoate = (S)-3-methyl-2-oxopentanoate + H2O. Its pathway is amino-acid biosynthesis; L-isoleucine biosynthesis; L-isoleucine from 2-oxobutanoate: step 3/4. It participates in amino-acid biosynthesis; L-valine biosynthesis; L-valine from pyruvate: step 3/4. Functions in the biosynthesis of branched-chain amino acids. Catalyzes the dehydration of (2R,3R)-2,3-dihydroxy-3-methylpentanoate (2,3-dihydroxy-3-methylvalerate) into 2-oxo-3-methylpentanoate (2-oxo-3-methylvalerate) and of (2R)-2,3-dihydroxy-3-methylbutanoate (2,3-dihydroxyisovalerate) into 2-oxo-3-methylbutanoate (2-oxoisovalerate), the penultimate precursor to L-isoleucine and L-valine, respectively. This chain is Dihydroxy-acid dehydratase, found in Corynebacterium aurimucosum (strain ATCC 700975 / DSM 44827 / CIP 107346 / CN-1) (Corynebacterium nigricans).